The primary structure comprises 382 residues: 4-hydroxy-3-methylbut-2-en-1-yl diphosphate synthase (flavodoxin) (382 aa).

[4Fe-4S] cluster contacts are provided by Cys273, Cys276, Cys308, and Glu315.

The protein belongs to the IspG family. Requires [4Fe-4S] cluster as cofactor.

It catalyses the reaction (2E)-4-hydroxy-3-methylbut-2-enyl diphosphate + oxidized [flavodoxin] + H2O + 2 H(+) = 2-C-methyl-D-erythritol 2,4-cyclic diphosphate + reduced [flavodoxin]. It functions in the pathway isoprenoid biosynthesis; isopentenyl diphosphate biosynthesis via DXP pathway; isopentenyl diphosphate from 1-deoxy-D-xylulose 5-phosphate: step 5/6. Its function is as follows. Converts 2C-methyl-D-erythritol 2,4-cyclodiphosphate (ME-2,4cPP) into 1-hydroxy-2-methyl-2-(E)-butenyl 4-diphosphate. In Gluconacetobacter diazotrophicus (strain ATCC 49037 / DSM 5601 / CCUG 37298 / CIP 103539 / LMG 7603 / PAl5), this protein is 4-hydroxy-3-methylbut-2-en-1-yl diphosphate synthase (flavodoxin).